The following is a 602-amino-acid chain: Chaperone protein dnaK (602 aa).

Belongs to the heat shock protein 70 family.

It localises to the plastid. The protein localises to the chloroplast. Its function is as follows. Acts as a chaperone. The sequence is that of Chaperone protein dnaK from Thalassiosira pseudonana (Marine diatom).